The following is a 305-amino-acid chain: C alpha-dehydrogenase (305 aa).

10-34 (FITGGASGAGFGQAKVFGQAGAKIV) is an NAD(+) binding site. Ser144 lines the substrate pocket. The Proton acceptor role is filled by Tyr157.

It belongs to the short-chain dehydrogenases/reductases (SDR) family.

It functions in the pathway secondary metabolite metabolism; lignin degradation. Its function is as follows. Catalyzes the C alpha dehydrogenation of arylglycerol-beta-aryl ether (C alpha alcohol type) (compound IV). This chain is C alpha-dehydrogenase (ligD), found in Sphingobium sp. (strain NBRC 103272 / SYK-6).